The following is a 271-amino-acid chain: Inactive phospholipid phosphatase 7 (271 aa).

The segment at 1-69 is disordered; the sequence is MPVSQSRARA…RQSQQLPEED (69 aa). Residues 1–112 are Cytoplasmic-facing; that stretch reads MPVSQSRARA…AASWASARSM (112 aa). The segment covering 24-36 has biased composition (polar residues); that stretch reads SLNQPPKGTQEPR. Phosphoserine occurs at positions 43 and 62. An interaction with MTOR region spans residues 70 to 91; that stretch reads CMQLNPSFKGIAFNSLLAIDIC. A helical transmembrane segment spans residues 113 to 133; sequence VKLIGITSHGIPWIGGTILCL. Over 134 to 141 the chain is Extracellular; it reads VRSSTLAG. A helical transmembrane segment spans residues 142–162; it reads QEVLMNLLLALLLDIMTVAGV. Topologically, residues 163-202 are cytoplasmic; that stretch reads QKLIKRRGPYETSPGLLDYLTMDIYAFPAGHASRAAMVSK. A helical transmembrane segment spans residues 203–223; the sequence is FFLSHLVLAVPLRVLLVLWAF. The Extracellular portion of the chain corresponds to 224–239; sequence CVGLSRVMIGRHHITD. Residues 240–260 form a helical membrane-spanning segment; it reads VISGFIIGYFQFRLVELVWMS. Over 261–271 the chain is Cytoplasmic; it reads SNTCQMLISAW.

Belongs to the PA-phosphatase related phosphoesterase family. Homo- and heterooligomer. Interacts with MTOR; controls MTOR-dependent IGF2 expression during myoblast differentiation.

The protein localises to the nucleus envelope. It localises to the endoplasmic reticulum membrane. The protein resides in the membrane. In terms of biological role, plays a role as negative regulator of myoblast differentiation, in part through effects on MTOR signaling. Has no detectable enzymatic activity. The protein is Inactive phospholipid phosphatase 7 of Rattus norvegicus (Rat).